Consider the following 510-residue polypeptide: GMP synthase [glutamine-hydrolyzing] (510 aa).

A Glutamine amidotransferase type-1 domain is found at 5–195 (LVLVIDFGGQ…LFKICGLKED (191 aa)). Residue cysteine 82 is the Nucleophile of the active site. Residues histidine 169 and glutamate 171 contribute to the active site. The region spanning 196–385 (WSMSSFAKEK…LGIPHKLVWR (190 aa)) is the GMPS ATP-PPase domain. Residue 223-229 (SGGVDSS) coordinates ATP.

In terms of assembly, homodimer.

The enzyme catalyses XMP + L-glutamine + ATP + H2O = GMP + L-glutamate + AMP + diphosphate + 2 H(+). It functions in the pathway purine metabolism; GMP biosynthesis; GMP from XMP (L-Gln route): step 1/1. Functionally, catalyzes the synthesis of GMP from XMP. The sequence is that of GMP synthase [glutamine-hydrolyzing] from Clostridium acetobutylicum (strain ATCC 824 / DSM 792 / JCM 1419 / IAM 19013 / LMG 5710 / NBRC 13948 / NRRL B-527 / VKM B-1787 / 2291 / W).